The chain runs to 339 residues: Phenylalanine--tRNA ligase alpha subunit (339 aa).

E254 lines the Mg(2+) pocket.

Belongs to the class-II aminoacyl-tRNA synthetase family. Phe-tRNA synthetase alpha subunit type 1 subfamily. As to quaternary structure, tetramer of two alpha and two beta subunits. It depends on Mg(2+) as a cofactor.

The protein localises to the cytoplasm. It catalyses the reaction tRNA(Phe) + L-phenylalanine + ATP = L-phenylalanyl-tRNA(Phe) + AMP + diphosphate + H(+). The protein is Phenylalanine--tRNA ligase alpha subunit of Clostridium botulinum (strain 657 / Type Ba4).